The sequence spans 416 residues: Serine hydroxymethyltransferase (416 aa).

(6S)-5,6,7,8-tetrahydrofolate-binding positions include Leu121 and 125-127; that span reads GHL. Residue Lys230 is modified to N6-(pyridoxal phosphate)lysine. Position 355–357 (355–357) interacts with (6S)-5,6,7,8-tetrahydrofolate; the sequence is SPF.

It belongs to the SHMT family. Homodimer. Pyridoxal 5'-phosphate serves as cofactor.

The protein resides in the cytoplasm. It carries out the reaction (6R)-5,10-methylene-5,6,7,8-tetrahydrofolate + glycine + H2O = (6S)-5,6,7,8-tetrahydrofolate + L-serine. The protein operates within one-carbon metabolism; tetrahydrofolate interconversion. It functions in the pathway amino-acid biosynthesis; glycine biosynthesis; glycine from L-serine: step 1/1. Its function is as follows. Catalyzes the reversible interconversion of serine and glycine with tetrahydrofolate (THF) serving as the one-carbon carrier. This reaction serves as the major source of one-carbon groups required for the biosynthesis of purines, thymidylate, methionine, and other important biomolecules. Also exhibits THF-independent aldolase activity toward beta-hydroxyamino acids, producing glycine and aldehydes, via a retro-aldol mechanism. This is Serine hydroxymethyltransferase from Streptococcus thermophilus (strain ATCC BAA-250 / LMG 18311).